We begin with the raw amino-acid sequence, 256 residues long: uncharacterized protein (256 aa).

A signal peptide spans 1-22 (MNNFRQCALCIGTSVLILLVSG). The N-palmitoyl cysteine moiety is linked to residue Cys23. A lipid anchor (S-diacylglycerol cysteine) is attached at Cys23.

Belongs to the staphylococcal tandem lipoprotein family.

It is found in the cell membrane. This is an uncharacterized protein from Staphylococcus aureus (strain bovine RF122 / ET3-1).